The primary structure comprises 175 residues: Ribosome maturation factor RimM (175 aa).

The PRC barrel domain occupies 97-175 (EGEFYWHQLE…RMVVDWDPEF (79 aa)).

The protein belongs to the RimM family. As to quaternary structure, binds ribosomal protein uS19.

It localises to the cytoplasm. Functionally, an accessory protein needed during the final step in the assembly of 30S ribosomal subunit, possibly for assembly of the head region. Essential for efficient processing of 16S rRNA. May be needed both before and after RbfA during the maturation of 16S rRNA. It has affinity for free ribosomal 30S subunits but not for 70S ribosomes. In Marinobacter nauticus (strain ATCC 700491 / DSM 11845 / VT8) (Marinobacter aquaeolei), this protein is Ribosome maturation factor RimM.